Consider the following 2319-residue polypeptide: Coagulation factor VIII (2319 aa).

An N-terminal signal peptide occupies residues 1–19; the sequence is MQIALFACFFLSLFNFCSS. Plastocyanin-like domains are found at residues 20 to 199 and 207 to 349; these read AIRR…LLVC and ERTQ…VDSC. The region spanning 20-349 is the F5/8 type A 1 domain; sequence AIRRYYLGAV…MEAYVKVDSC (330 aa). An N-linked (GlcNAc...) asparagine glycan is attached at asparagine 61. A disulfide bridge links cysteine 173 with cysteine 199. N-linked (GlcNAc...) asparagine glycosylation is found at asparagine 233 and asparagine 259. Tyrosine 367 is modified (sulfotyrosine). Plastocyanin-like domains follow at residues 399-573 and 583-730; these read KTWI…LLIC and NQMM…VSSC. An F5/8 type A 2 domain is found at 399–730; that stretch reads KTWIHYISAE…MTALLKVSSC (332 aa). N-linked (GlcNAc...) asparagine glycosylation is present at asparagine 423. A disulfide bridge connects residues cysteine 547 and cysteine 573. Asparagine 601 carries N-linked (GlcNAc...) asparagine glycosylation. A sulfotyrosine mark is found at tyrosine 737, tyrosine 738, and tyrosine 742. Residues 760–1640 are b; it reads SFFQNTNHPN…IPPVLKRHQR (881 aa). 19 N-linked (GlcNAc...) asparagine glycosylation sites follow: asparagine 880, asparagine 958, asparagine 1015, asparagine 1022, asparagine 1026, asparagine 1044, asparagine 1076, asparagine 1087, asparagine 1136, asparagine 1161, asparagine 1192, asparagine 1255, asparagine 1268, asparagine 1273, asparagine 1274, asparagine 1302, asparagine 1316, asparagine 1340, and asparagine 1378. The disordered stretch occupies residues 1530–1549; that stretch reads WNKAKRHGESIKGKTESSKN. Over residues 1536-1548 the composition is skewed to basic and acidic residues; that stretch reads HGESIKGKTESSK. Residues tyrosine 1669 and tyrosine 1687 each carry the sulfotyrosine modification. Plastocyanin-like domains are found at residues 1683-1845 and 1855-2008; these read KTRH…LLIC and GRQV…SKQC. The region spanning 1683–2008 is the F5/8 type A 3 domain; it reads KTRHYFIAAV…TLFLVYSKQC (326 aa). N-linked (GlcNAc...) asparagine glycosylation is present at asparagine 1797. Intrachain disulfides connect cysteine 1819-cysteine 1845, cysteine 2008-cysteine 2156, and cysteine 2161-cysteine 2313. 2 F5/8 type C domains span residues 2008–2156 and 2161–2313; these read CQIP…LMGC and CSIP…ILGC. Asparagine 2105 is a glycosylation site (N-linked (GlcNAc...) asparagine).

The protein belongs to the multicopper oxidase family. Interacts with vWF. vWF binding is essential for the stabilization of F8 in circulation. In terms of processing, the binding of vWF and activation depend on the sulfation of Tyr-1669. Proteolytically cleaved by cathepsin CTSG to produce a partially activated form. Found in most tissues.

The protein localises to the secreted. It localises to the extracellular space. Factor VIII, along with calcium and phospholipid, acts as a cofactor for factor IXa when it converts factor X to the activated form, factor Xa. The sequence is that of Coagulation factor VIII (F8) from Mus musculus (Mouse).